The chain runs to 209 residues: Uracil phosphoribosyltransferase (209 aa).

Residues Arg79, Arg104, and Asp131–Ser139 contribute to the 5-phospho-alpha-D-ribose 1-diphosphate site. Residues Ile194 and Gly199–Ala201 contribute to the uracil site. Position 200 (Asp200) interacts with 5-phospho-alpha-D-ribose 1-diphosphate.

The protein belongs to the UPRTase family. Mg(2+) serves as cofactor.

The catalysed reaction is UMP + diphosphate = 5-phospho-alpha-D-ribose 1-diphosphate + uracil. It functions in the pathway pyrimidine metabolism; UMP biosynthesis via salvage pathway; UMP from uracil: step 1/1. Allosterically activated by GTP. In terms of biological role, catalyzes the conversion of uracil and 5-phospho-alpha-D-ribose 1-diphosphate (PRPP) to UMP and diphosphate. The chain is Uracil phosphoribosyltransferase from Streptococcus pyogenes serotype M49 (strain NZ131).